Here is a 605-residue protein sequence, read N- to C-terminus: Isocitrate dehydrogenase kinase/phosphatase (605 aa).

ATP contacts are provided by residues 327 to 333 and K348; that span reads APGIKGL. D383 is an active-site residue.

It belongs to the AceK family.

The protein localises to the cytoplasm. It catalyses the reaction L-seryl-[isocitrate dehydrogenase] + ATP = O-phospho-L-seryl-[isocitrate dehydrogenase] + ADP + H(+). In terms of biological role, bifunctional enzyme which can phosphorylate or dephosphorylate isocitrate dehydrogenase (IDH) on a specific serine residue. This is a regulatory mechanism which enables bacteria to bypass the Krebs cycle via the glyoxylate shunt in response to the source of carbon. When bacteria are grown on glucose, IDH is fully active and unphosphorylated, but when grown on acetate or ethanol, the activity of IDH declines drastically concomitant with its phosphorylation. This is Isocitrate dehydrogenase kinase/phosphatase from Burkholderia orbicola (strain MC0-3).